Reading from the N-terminus, the 310-residue chain is Homoserine kinase (310 aa).

An ATP-binding site is contributed by 85–95 (PKGLGLGSSGA).

This sequence belongs to the GHMP kinase family. Homoserine kinase subfamily.

Its subcellular location is the cytoplasm. It carries out the reaction L-homoserine + ATP = O-phospho-L-homoserine + ADP + H(+). Its pathway is amino-acid biosynthesis; L-threonine biosynthesis; L-threonine from L-aspartate: step 4/5. Catalyzes the ATP-dependent phosphorylation of L-homoserine to L-homoserine phosphate. This is Homoserine kinase from Thermoplasma acidophilum (strain ATCC 25905 / DSM 1728 / JCM 9062 / NBRC 15155 / AMRC-C165).